A 244-amino-acid chain; its full sequence is Uridylate kinase (244 aa).

ATP is bound at residue 19–22; the sequence is KVSG. The interval 27 to 32 is involved in allosteric activation by GTP; sequence GERGFG. UMP is bound at residue glycine 61. 2 residues coordinate ATP: glycine 62 and arginine 66. Residues aspartate 80 and 141–148 contribute to the UMP site; that span reads IGSPFFTT. 4 residues coordinate ATP: threonine 168, glutamine 169, tyrosine 174, and aspartate 177.

This sequence belongs to the UMP kinase family. Homohexamer.

It is found in the cytoplasm. The catalysed reaction is UMP + ATP = UDP + ADP. It functions in the pathway pyrimidine metabolism; CTP biosynthesis via de novo pathway; UDP from UMP (UMPK route): step 1/1. With respect to regulation, allosterically activated by GTP. Inhibited by UTP. Functionally, catalyzes the reversible phosphorylation of UMP to UDP. This chain is Uridylate kinase, found in Anaplasma phagocytophilum (strain HZ).